Here is a 289-residue protein sequence, read N- to C-terminus: ATP phosphoribosyltransferase (289 aa).

This sequence belongs to the ATP phosphoribosyltransferase family. Long subfamily. Mg(2+) serves as cofactor.

Its subcellular location is the cytoplasm. It catalyses the reaction 1-(5-phospho-beta-D-ribosyl)-ATP + diphosphate = 5-phospho-alpha-D-ribose 1-diphosphate + ATP. Its pathway is amino-acid biosynthesis; L-histidine biosynthesis; L-histidine from 5-phospho-alpha-D-ribose 1-diphosphate: step 1/9. Feedback inhibited by histidine. Its function is as follows. Catalyzes the condensation of ATP and 5-phosphoribose 1-diphosphate to form N'-(5'-phosphoribosyl)-ATP (PR-ATP). Has a crucial role in the pathway because the rate of histidine biosynthesis seems to be controlled primarily by regulation of HisG enzymatic activity. The polypeptide is ATP phosphoribosyltransferase (Pelotomaculum thermopropionicum (strain DSM 13744 / JCM 10971 / SI)).